Here is a 246-residue protein sequence, read N- to C-terminus: Enolase-phosphatase E1 (246 aa).

2 residues coordinate Mg(2+): Asp-15 and Glu-17. Substrate-binding positions include 134–135 (SS) and Lys-174. Asp-201 is a binding site for Mg(2+).

This sequence belongs to the HAD-like hydrolase superfamily. MasA/MtnC family. As to quaternary structure, monomer. Requires Mg(2+) as cofactor.

It is found in the cytoplasm. It localises to the nucleus. It carries out the reaction 5-methylsulfanyl-2,3-dioxopentyl phosphate + H2O = 1,2-dihydroxy-5-(methylsulfanyl)pent-1-en-3-one + phosphate. It participates in amino-acid biosynthesis; L-methionine biosynthesis via salvage pathway; L-methionine from S-methyl-5-thio-alpha-D-ribose 1-phosphate: step 3/6. Its pathway is amino-acid biosynthesis; L-methionine biosynthesis via salvage pathway; L-methionine from S-methyl-5-thio-alpha-D-ribose 1-phosphate: step 4/6. Bifunctional enzyme that catalyzes the enolization of 2,3-diketo-5-methylthiopentyl-1-phosphate (DK-MTP-1-P) into the intermediate 2-hydroxy-3-keto-5-methylthiopentenyl-1-phosphate (HK-MTPenyl-1-P), which is then dephosphorylated to form the acireductone 1,2-dihydroxy-3-keto-5-methylthiopentene (DHK-MTPene). The polypeptide is Enolase-phosphatase E1 (Debaryomyces hansenii (strain ATCC 36239 / CBS 767 / BCRC 21394 / JCM 1990 / NBRC 0083 / IGC 2968) (Yeast)).